We begin with the raw amino-acid sequence, 216 residues long: Somatotropin (216 aa).

Residues 1–26 (MAAGSWTAGLLAFALLCLPWPQEASA) form the signal peptide. H45 is a binding site for Zn(2+). C78 and C189 are joined by a disulfide. S131 bears the Phosphoserine mark. Residue E198 participates in Zn(2+) binding. The cysteines at positions 206 and 214 are disulfide-linked.

The protein belongs to the somatotropin/prolactin family.

The protein localises to the secreted. Plays an important role in growth control. Its major role in stimulating body growth is to stimulate the liver and other tissues to secrete IGF1. It stimulates both the differentiation and proliferation of myoblasts. It also stimulates amino acid uptake and protein synthesis in muscle and other tissues. This chain is Somatotropin (GH1), found in Oryctolagus cuniculus (Rabbit).